The chain runs to 657 residues: Tyrosine-protein phosphatase vhp-1 (657 aa).

The Rhodanese domain maps to 21–151; it reads APDTTLVVDC…FAQQYPQLCE (131 aa). A Tyrosine-protein phosphatase domain is found at 175–318; that stretch reads GITLITPNIY…LLEYENVLIK (144 aa). C262 functions as the Phosphocysteine intermediate in the catalytic mechanism. Disordered regions lie at residues 353–426, 539–563, and 581–657; these read SNCV…MDLG, VPAG…SSSA, and PAST…PCHQ. Low complexity predominate over residues 366 to 405; the sequence is SPSSPSVSEGSAASEPETSSSAASSSSTASAPPSMPSTSE. Residues 406–419 are compositionally biased toward polar residues; that stretch reads QGTSSGTVNVNGKR. Low complexity-rich tracts occupy residues 542–563 and 581–597; these read GSSS…SSSA and PAST…TSRA.

It belongs to the protein-tyrosine phosphatase family. Non-receptor class dual specificity subfamily. In terms of assembly, may interact with pmk-3. As to expression, expressed in the pharynx, intestine, neurons and vulval hypodermal cells.

The enzyme catalyses O-phospho-L-tyrosyl-[protein] + H2O = L-tyrosyl-[protein] + phosphate. Acts preferentially on the c-Jun N-terminal kinase (JNK) and p38 MAPKs. Plays an important role in the heavy metal stress response and in axon regeneration by negatively regulating the kgb-1 (JNK-like) and the pmk-1 (p38-type) MAPK signaling pathways. The protein is Tyrosine-protein phosphatase vhp-1 (vhp-1) of Caenorhabditis elegans.